We begin with the raw amino-acid sequence, 307 residues long: ATP-dependent (S)-NAD(P)H-hydrate dehydratase (307 aa).

Residues 1–291 form the YjeF C-terminal domain; sequence MDHFLKLLPK…DEIPKLVRDV (291 aa). (6S)-NADPHX is bound by residues Gly-96 and 150–156; that span reads NIVEFSR. Residues 194–198 and 214–223 contribute to the ATP site; these read KGEVD and SSLRRCGGQG. Residue Asp-224 participates in (6S)-NADPHX binding.

Belongs to the NnrD/CARKD family. It depends on Mg(2+) as a cofactor.

It carries out the reaction (6S)-NADHX + ATP = ADP + phosphate + NADH + H(+). The enzyme catalyses (6S)-NADPHX + ATP = ADP + phosphate + NADPH + H(+). Catalyzes the dehydration of the S-form of NAD(P)HX at the expense of ATP, which is converted to ADP. Together with NAD(P)HX epimerase, which catalyzes the epimerization of the S- and R-forms, the enzyme allows the repair of both epimers of NAD(P)HX, a damaged form of NAD(P)H that is a result of enzymatic or heat-dependent hydration. In Caenorhabditis briggsae, this protein is ATP-dependent (S)-NAD(P)H-hydrate dehydratase.